We begin with the raw amino-acid sequence, 777 residues long: Endonuclease MutS2 (777 aa).

328–335 is a binding site for ATP; the sequence is GPNTGGKT. One can recognise a Smr domain in the interval 702 to 777; that stretch reads LDLRGKRYEE…GSGATIVIFK (76 aa).

It belongs to the DNA mismatch repair MutS family. MutS2 subfamily. As to quaternary structure, homodimer. Binds to stalled ribosomes, contacting rRNA.

Functionally, endonuclease that is involved in the suppression of homologous recombination and thus may have a key role in the control of bacterial genetic diversity. Its function is as follows. Acts as a ribosome collision sensor, splitting the ribosome into its 2 subunits. Detects stalled/collided 70S ribosomes which it binds and splits by an ATP-hydrolysis driven conformational change. Acts upstream of the ribosome quality control system (RQC), a ribosome-associated complex that mediates the extraction of incompletely synthesized nascent chains from stalled ribosomes and their subsequent degradation. Probably generates substrates for RQC. The sequence is that of Endonuclease MutS2 from Streptococcus sanguinis (strain SK36).